A 400-amino-acid polypeptide reads, in one-letter code: Acetate kinase (400 aa).

Asn-7 contacts Mg(2+). Residue Lys-14 coordinates ATP. Arg-92 lines the substrate pocket. Asp-149 functions as the Proton donor/acceptor in the catalytic mechanism. ATP contacts are provided by residues His-209 to Gly-213, Asp-283 to Arg-285, and Gly-331 to Asn-335. Residue Glu-385 coordinates Mg(2+).

This sequence belongs to the acetokinase family. Homodimer. The cofactor is Mg(2+). Mn(2+) serves as cofactor.

It localises to the cytoplasm. The enzyme catalyses acetate + ATP = acetyl phosphate + ADP. Its pathway is metabolic intermediate biosynthesis; acetyl-CoA biosynthesis; acetyl-CoA from acetate: step 1/2. Functionally, catalyzes the formation of acetyl phosphate from acetate and ATP. Can also catalyze the reverse reaction. The sequence is that of Acetate kinase from Helicobacter acinonychis (strain Sheeba).